An 842-amino-acid chain; its full sequence is Alanine--tRNA ligase (842 aa).

His549, His553, Cys650, and His654 together coordinate Zn(2+).

This sequence belongs to the class-II aminoacyl-tRNA synthetase family. Zn(2+) serves as cofactor.

It localises to the cytoplasm. It carries out the reaction tRNA(Ala) + L-alanine + ATP = L-alanyl-tRNA(Ala) + AMP + diphosphate. Functionally, catalyzes the attachment of alanine to tRNA(Ala) in a two-step reaction: alanine is first activated by ATP to form Ala-AMP and then transferred to the acceptor end of tRNA(Ala). Also edits incorrectly charged Ser-tRNA(Ala) and Gly-tRNA(Ala) via its editing domain. This Campylobacter jejuni subsp. jejuni serotype O:23/36 (strain 81-176) protein is Alanine--tRNA ligase.